A 388-amino-acid chain; its full sequence is Succinate--CoA ligase [ADP-forming] subunit beta (388 aa).

In terms of domain architecture, ATP-grasp spans 9–244 (KEILRKYGVT…LDEEDPAEIE (236 aa)). ATP-binding positions include lysine 46, 53–55 (GRG), glutamate 99, alanine 102, and glutamate 107. Positions 199 and 213 each coordinate Mg(2+). Residues asparagine 264 and 321–323 (GIM) contribute to the substrate site.

The protein belongs to the succinate/malate CoA ligase beta subunit family. As to quaternary structure, heterotetramer of two alpha and two beta subunits. Requires Mg(2+) as cofactor.

The enzyme catalyses succinate + ATP + CoA = succinyl-CoA + ADP + phosphate. The catalysed reaction is GTP + succinate + CoA = succinyl-CoA + GDP + phosphate. It functions in the pathway carbohydrate metabolism; tricarboxylic acid cycle; succinate from succinyl-CoA (ligase route): step 1/1. Succinyl-CoA synthetase functions in the citric acid cycle (TCA), coupling the hydrolysis of succinyl-CoA to the synthesis of either ATP or GTP and thus represents the only step of substrate-level phosphorylation in the TCA. The beta subunit provides nucleotide specificity of the enzyme and binds the substrate succinate, while the binding sites for coenzyme A and phosphate are found in the alpha subunit. The protein is Succinate--CoA ligase [ADP-forming] subunit beta of Janthinobacterium sp. (strain Marseille) (Minibacterium massiliensis).